Reading from the N-terminus, the 202-residue chain is Small ribosomal subunit protein uS4c (202 aa).

An S4 RNA-binding domain is found at 90–165; the sequence is MRLDNILFRL…SQKYKIPNHL (76 aa).

This sequence belongs to the universal ribosomal protein uS4 family. In terms of assembly, part of the 30S ribosomal subunit. Contacts protein S5. The interaction surface between S4 and S5 is involved in control of translational fidelity.

The protein localises to the plastid. Its subcellular location is the chloroplast. Its function is as follows. One of the primary rRNA binding proteins, it binds directly to 16S rRNA where it nucleates assembly of the body of the 30S subunit. In terms of biological role, with S5 and S12 plays an important role in translational accuracy. The protein is Small ribosomal subunit protein uS4c (rps4) of Diphyscium foliosum (Nut-moss).